Consider the following 126-residue polypeptide: Aspartate 1-decarboxylase (126 aa).

Residue Ser-25 is the Schiff-base intermediate with substrate; via pyruvic acid of the active site. Ser-25 carries the post-translational modification Pyruvic acid (Ser). Position 57 (Thr-57) interacts with substrate. The active-site Proton donor is Tyr-58. Substrate is bound at residue 73–75; sequence GAA.

It belongs to the PanD family. Heterooctamer of four alpha and four beta subunits. It depends on pyruvate as a cofactor. In terms of processing, is synthesized initially as an inactive proenzyme, which is activated by self-cleavage at a specific serine bond to produce a beta-subunit with a hydroxyl group at its C-terminus and an alpha-subunit with a pyruvoyl group at its N-terminus.

It localises to the cytoplasm. The catalysed reaction is L-aspartate + H(+) = beta-alanine + CO2. It functions in the pathway cofactor biosynthesis; (R)-pantothenate biosynthesis; beta-alanine from L-aspartate: step 1/1. In terms of biological role, catalyzes the pyruvoyl-dependent decarboxylation of aspartate to produce beta-alanine. This Pseudomonas aeruginosa (strain LESB58) protein is Aspartate 1-decarboxylase.